Reading from the N-terminus, the 348-residue chain is Large ribosomal subunit protein uL10 (348 aa).

Positions 291–348 (LPEELRGVSAADTGAAEEEESTDEEAADADQADAAEDDDAADDDGDDEDAGDALGSLF) are disordered. The segment covering 305–341 (AAEEEESTDEEAADADQADAAEDDDAADDDGDDEDAG) has biased composition (acidic residues).

Belongs to the universal ribosomal protein uL10 family. In terms of assembly, part of the 50S ribosomal subunit. Forms part of the ribosomal stalk which helps the ribosome interact with GTP-bound translation factors. Forms a heptameric L10(L12)2(L12)2(L12)2 complex, where L10 forms an elongated spine to which the L12 dimers bind in a sequential fashion.

Forms part of the ribosomal stalk, playing a central role in the interaction of the ribosome with GTP-bound translation factors. The chain is Large ribosomal subunit protein uL10 from Haloferax volcanii (strain ATCC 29605 / DSM 3757 / JCM 8879 / NBRC 14742 / NCIMB 2012 / VKM B-1768 / DS2) (Halobacterium volcanii).